The sequence spans 196 residues: UPF0056 membrane protein BU449 (196 aa).

A run of 6 helical transmembrane segments spans residues 8-28 (TILL…MTIL), 45-65 (IIAL…LIIL), 71-91 (TVSI…IFPS), 105-125 (FLVP…TLML), 134-154 (MFYL…ILLS), and 174-194 (MGLV…RAWF).

Belongs to the UPF0056 (MarC) family.

The protein resides in the cell membrane. The protein is UPF0056 membrane protein BU449 of Buchnera aphidicola subsp. Acyrthosiphon pisum (strain APS) (Acyrthosiphon pisum symbiotic bacterium).